We begin with the raw amino-acid sequence, 486 residues long: Malonate-semialdehyde dehydrogenase 1 (486 aa).

NAD(+)-binding residues include F154, K178, E181, R182, and S231. C286 functions as the Nucleophile in the catalytic mechanism. E386 is an NAD(+) binding site.

It belongs to the aldehyde dehydrogenase family. IolA subfamily. Homotetramer.

It catalyses the reaction 3-oxopropanoate + NAD(+) + CoA + H2O = hydrogencarbonate + acetyl-CoA + NADH + H(+). It carries out the reaction 2-methyl-3-oxopropanoate + NAD(+) + CoA + H2O = propanoyl-CoA + hydrogencarbonate + NADH + H(+). It participates in polyol metabolism; myo-inositol degradation into acetyl-CoA; acetyl-CoA from myo-inositol: step 7/7. Functionally, catalyzes the oxidation of malonate semialdehyde (MSA) and methylmalonate semialdehyde (MMSA) into acetyl-CoA and propanoyl-CoA, respectively. Is involved in a myo-inositol catabolic pathway. Bicarbonate, and not CO2, is the end-product of the enzymatic reaction. The chain is Malonate-semialdehyde dehydrogenase 1 from Bacillus thuringiensis (strain Al Hakam).